Here is a 448-residue protein sequence, read N- to C-terminus: Tryptophan--tRNA ligase (448 aa).

ATP is bound by residues 10–12 and 18–19; these read TPT and GN. Positions 11-19 match the 'HIGH' region motif; that stretch reads PTGTPHLGN. D143 provides a ligand contact to L-tryptophan. ATP is bound by residues 155 to 157, L197, and 204 to 208; these read GRD and KMSKS. A 'KMSKS' region motif is present at residues 204-208; that stretch reads KMSKS.

This sequence belongs to the class-I aminoacyl-tRNA synthetase family. Homodimer.

It is found in the cytoplasm. It catalyses the reaction tRNA(Trp) + L-tryptophan + ATP = L-tryptophyl-tRNA(Trp) + AMP + diphosphate + H(+). Functionally, catalyzes the attachment of tryptophan to tRNA(Trp). The protein is Tryptophan--tRNA ligase of Pseudomonas aeruginosa (strain ATCC 15692 / DSM 22644 / CIP 104116 / JCM 14847 / LMG 12228 / 1C / PRS 101 / PAO1).